A 153-amino-acid chain; its full sequence is MLEKLMGADSLQLFRSRYTLGKIYFIGFQRSILLSKSENSLNSIAKETEEGRETVTRKEGWKRRHEDGYLEMAQRHLQRSLCPWVSYLPQPYAELEEVSSHVGKVFMARNYEFLAYEASKDRRQPLERMWTCNYNQQKDQSCNHKEITSTKAE.

The tract at residues 1–25 is involved in targeting to the mitochondrion; that stretch reads MLEKLMGADSLQLFRSRYTLGKIYF. Residues 138-153 are interaction with DAO; that stretch reads KDQSCNHKEITSTKAE.

As to quaternary structure, interacts with DAO (D-amino acid oxidase); the interaction is direct, can occur in the presence or absence of FAD or substrate bound to DAO, and results in a complex containing two DAO homodimers and two DAOA monomers. Interacts with DDO (D-aspartate oxidase); the interaction is direct. Interacts wih SOD1; the interaction is direct. Interacts with MSRB2; the interaction is direct. In terms of tissue distribution, expressed in the amygdala and in astrocytes of the cortex (at protein level). Expressed in the caudate nucleus, spinal cord and testis.

Its subcellular location is the cytoplasm. It is found in the cytosol. The protein resides in the golgi apparatus. The protein localises to the mitochondrion. Its function is as follows. May suppress DAO (D-amino acid oxidase) and SOD1 activity and promote their degradation. Has conversely also been suggested to function as a DAO activator. May stimulate the degradation of DDO (D-aspartate oxidase). May play a role in mitochondrial fission. The protein is D-amino acid oxidase regulator (DAOA) of Homo sapiens (Human).